Reading from the N-terminus, the 292-residue chain is Pantothenate synthetase (292 aa).

Residue 30-37 participates in ATP binding; it reads MGFLHIGH. His37 (proton donor) is an active-site residue. Gln61 serves as a coordination point for (R)-pantoate. Position 61 (Gln61) interacts with beta-alanine. 147-150 is an ATP binding site; sequence GEKD. Gln153 is a binding site for (R)-pantoate. ATP is bound by residues Val176 and 184-187; that span reads CSSR.

The protein belongs to the pantothenate synthetase family. In terms of assembly, homodimer.

It localises to the cytoplasm. It carries out the reaction (R)-pantoate + beta-alanine + ATP = (R)-pantothenate + AMP + diphosphate + H(+). It functions in the pathway cofactor biosynthesis; (R)-pantothenate biosynthesis; (R)-pantothenate from (R)-pantoate and beta-alanine: step 1/1. Catalyzes the condensation of pantoate with beta-alanine in an ATP-dependent reaction via a pantoyl-adenylate intermediate. The chain is Pantothenate synthetase from Agrobacterium fabrum (strain C58 / ATCC 33970) (Agrobacterium tumefaciens (strain C58)).